A 500-amino-acid polypeptide reads, in one-letter code: Protein DETOXIFICATION 29 (500 aa).

Helical transmembrane passes span 67–87 (GAIT…AVSV), 91–111 (VVAG…ETLC), 132–152 (VILN…APIL), 161–181 (ISSA…AYAI), 197–217 (VMAV…WFVI), 227–247 (LAVV…VYIF), 277–297 (AVML…AGYL), 302–322 (ISVA…MIAI), 349–369 (LVAV…LLIF), 393–413 (ILAL…VAVG), 419–439 (VVAY…GLLL), and 449–469 (GIWC…TWMI).

Belongs to the multi antimicrobial extrusion (MATE) (TC 2.A.66.1) family.

It is found in the vacuole membrane. The protein is Protein DETOXIFICATION 29 of Arabidopsis thaliana (Mouse-ear cress).